The following is an 84-amino-acid chain: RNA-binding protein Hfq (84 aa).

Residues 11–71 (DVFLNFIRKN…ISTVMPSTPI (61 aa)) enclose the Sm domain.

The protein belongs to the Hfq family. In terms of assembly, homohexamer.

RNA chaperone that binds small regulatory RNA (sRNAs) and mRNAs to facilitate mRNA translational regulation in response to envelope stress, environmental stress and changes in metabolite concentrations. Also binds with high specificity to tRNAs. In Paramagnetospirillum magneticum (strain ATCC 700264 / AMB-1) (Magnetospirillum magneticum), this protein is RNA-binding protein Hfq.